A 97-amino-acid chain; its full sequence is UPF0390 protein CNBD1430 (97 aa).

Disordered stretches follow at residues 1–57 (MAQG…INNS) and 75–97 (RNVG…GKSR). Residues 29-46 (GKREVAPKDRQRVLERSQ) are compositionally biased toward basic and acidic residues. The span at 48–57 (KQLSSKINNS) shows a compositional bias: polar residues.

This sequence belongs to the UPF0390 family.

This Cryptococcus neoformans var. neoformans serotype D (strain B-3501A) (Filobasidiella neoformans) protein is UPF0390 protein CNBD1430.